We begin with the raw amino-acid sequence, 207 residues long: dTTP/UTP pyrophosphatase (207 aa).

Aspartate 80 acts as the Proton acceptor in catalysis.

The protein belongs to the Maf family. YhdE subfamily. It depends on a divalent metal cation as a cofactor.

It localises to the cytoplasm. The catalysed reaction is dTTP + H2O = dTMP + diphosphate + H(+). It carries out the reaction UTP + H2O = UMP + diphosphate + H(+). Nucleoside triphosphate pyrophosphatase that hydrolyzes dTTP and UTP. May have a dual role in cell division arrest and in preventing the incorporation of modified nucleotides into cellular nucleic acids. The chain is dTTP/UTP pyrophosphatase (maf1) from Agrobacterium fabrum (strain C58 / ATCC 33970) (Agrobacterium tumefaciens (strain C58)).